The chain runs to 325 residues: Cytochrome f (325 aa).

The signal sequence occupies residues 1–40 (MSKINLSTMWSSFIKKIAKTILVAIACISLFLTSSPAANA). The heme site is built by Y41, C62, C65, and H66. Residues 291–311 (VKWLMAFFALVMLAQIMLVLK) traverse the membrane as a helical segment.

This sequence belongs to the cytochrome f family. In terms of assembly, the 4 large subunits of the cytochrome b6-f complex are cytochrome b6, subunit IV (17 kDa polypeptide, PetD), cytochrome f and the Rieske protein, while the 4 small subunits are PetG, PetL, PetM and PetN. The complex functions as a dimer. Heme serves as cofactor.

It localises to the cellular thylakoid membrane. In terms of biological role, component of the cytochrome b6-f complex, which mediates electron transfer between photosystem II (PSII) and photosystem I (PSI), cyclic electron flow around PSI, and state transitions. The sequence is that of Cytochrome f from Trichodesmium erythraeum (strain IMS101).